Reading from the N-terminus, the 316-residue chain is Nucleoprotein (316 aa).

The RNA site is built by tyrosine 43, tyrosine 46, valine 76, arginine 122, and lysine 240.

This sequence belongs to the tenuiviruses nucleocapsid protein family.

The protein resides in the virion. It is found in the host cytoplasm. Encapsidates the genome, protecting it from nucleases. The encapsidated genomic RNA is termed the nucleocapsid (NC), and serves as template for viral transcription and replication. This is Nucleoprotein from Maize stripe virus (MStV).